A 536-amino-acid chain; its full sequence is Phosphoenolpyruvate carboxykinase (ATP) (536 aa).

3 residues coordinate substrate: Arg-62, Tyr-203, and Lys-209. ATP-binding positions include Lys-209, His-228, and 244 to 252; that span reads GLSGTGKTT. Mn(2+)-binding residues include Lys-209 and His-228. Residue Asp-265 coordinates Mn(2+). ATP is bound by residues Glu-293, Arg-329, 445–446, and Thr-451; that span reads RI. Arg-329 is a binding site for substrate.

This sequence belongs to the phosphoenolpyruvate carboxykinase (ATP) family. As to quaternary structure, monomer. Mn(2+) is required as a cofactor.

It localises to the cytoplasm. The enzyme catalyses oxaloacetate + ATP = phosphoenolpyruvate + ADP + CO2. Its pathway is carbohydrate biosynthesis; gluconeogenesis. In terms of biological role, involved in the gluconeogenesis. Catalyzes the conversion of oxaloacetate (OAA) to phosphoenolpyruvate (PEP) through direct phosphoryl transfer between the nucleoside triphosphate and OAA. The sequence is that of Phosphoenolpyruvate carboxykinase (ATP) from Glaesserella parasuis serovar 5 (strain SH0165) (Haemophilus parasuis).